We begin with the raw amino-acid sequence, 153 residues long: Vasotocin-neurophysin VT 1 (153 aa).

An N-terminal signal peptide occupies residues 1–20 (MPYSTFPLLWVLGLLALSSA). A disulfide bond links Cys21 and Cys26. A Glycine amide modification is found at Gly29. Cystine bridges form between Cys41–Cys85, Cys44–Cys58, Cys52–Cys75, Cys59–Cys65, Cys92–Cys104, Cys98–Cys116, and Cys105–Cys110.

It belongs to the vasopressin/oxytocin family. Seven disulfide bonds are present in neurophysin.

The protein resides in the secreted. Vasotocin is an antidiuretic hormone. In Oncorhynchus keta (Chum salmon), this protein is Vasotocin-neurophysin VT 1.